Reading from the N-terminus, the 362-residue chain is Ferredoxin--NADP reductase, leaf isozyme 1, chloroplastic (362 aa).

The N-terminal 36 residues, 1–36 (MAAVTAAAVSTSAAAAVTKASPSPAHCFLPCPPRTR), are a transit peptide targeting the chloroplast. Positions 83-205 (KEPYVGKCLL…TGPVGKEMLM (123 aa)) constitute an FAD-binding FR-type domain. FAD contacts are provided by residues 141-144 (RLYS), 162-164 (CVK), Y168, 179-181 (VCS), and T220. S144 and K164 together coordinate NADP(+). Residues C180 and C185 are joined by a disulfide bond. Position 181 is a phosphoserine (S181). Residues T220, 252–253 (VP), 282–283 (SR), K292, 321–322 (GL), and E360 each bind NADP(+).

The protein belongs to the ferredoxin--NADP reductase type 1 family. As to quaternary structure, heterodimer with LFNR2. Component of high molecular weight thylakoid LFNRs-containing protein complexes containing LIR1, LFNR1, LFNR2, TIC62 and TROL proteins. Interacts directly with LFNR1 and LFNR2; LIR1 increases the affinity of LFNR1 and LFNR2 for TIC62 and subsequent thylakoid relocalization. FAD is required as a cofactor. Post-translationally, may form interchain disulfide bonds with LIR1.

The protein resides in the plastid. It is found in the chloroplast stroma. The protein localises to the chloroplast thylakoid membrane. It catalyses the reaction 2 reduced [2Fe-2S]-[ferredoxin] + NADP(+) + H(+) = 2 oxidized [2Fe-2S]-[ferredoxin] + NADPH. The protein operates within energy metabolism; photosynthesis. Plays a key role in regulating the relative amounts of cyclic and non-cyclic electron flow to meet the demands of the plant for ATP and reducing power. This is Ferredoxin--NADP reductase, leaf isozyme 1, chloroplastic from Oryza sativa subsp. indica (Rice).